Here is a 123-residue protein sequence, read N- to C-terminus: Large ribosomal subunit protein bL20 (123 aa).

Belongs to the bacterial ribosomal protein bL20 family.

Its function is as follows. Binds directly to 23S ribosomal RNA and is necessary for the in vitro assembly process of the 50S ribosomal subunit. It is not involved in the protein synthesizing functions of that subunit. The chain is Large ribosomal subunit protein bL20 (rplT) from Chlamydia trachomatis serovar D (strain ATCC VR-885 / DSM 19411 / UW-3/Cx).